A 767-amino-acid polypeptide reads, in one-letter code: Tetratricopeptide repeat protein 16 (767 aa).

9 TPR repeats span residues 18-51, 53-85, 93-126, 128-155, 208-241, 242-275, 288-321, 322-355, and 363-396; these read VREY…DPKL, DFYV…DPGN, AFVL…QPQN, SFSY…REVK, AKQS…NPLD, PNFF…VTDT, LLTY…EQNE, KGLY…SPLD, and GVLQ…SPQK. The disordered stretch occupies residues 612–733; that stretch reads EVTPAYGQRD…DSLSFSEISS (122 aa). Positions 684 to 718 are enriched in polar residues; sequence QRSSQKVTKTPSLTHSTTHSDIGESANDTPGQTPW.

The protein is Tetratricopeptide repeat protein 16 (Ttc16) of Mus musculus (Mouse).